The chain runs to 130 residues: Ribonuclease P protein component 2 (130 aa).

This sequence belongs to the eukaryotic/archaeal RNase P protein component 2 family. Consists of a catalytic RNA component and at least 4-5 protein subunits.

It is found in the cytoplasm. It catalyses the reaction Endonucleolytic cleavage of RNA, removing 5'-extranucleotides from tRNA precursor.. Functionally, part of ribonuclease P, a protein complex that generates mature tRNA molecules by cleaving their 5'-ends. The chain is Ribonuclease P protein component 2 from Methanococcus maripaludis (strain C6 / ATCC BAA-1332).